The chain runs to 169 residues: Peptide methionine sulfoxide reductase MsrA (169 aa).

The active site involves cysteine 10.

This sequence belongs to the MsrA Met sulfoxide reductase family.

It carries out the reaction L-methionyl-[protein] + [thioredoxin]-disulfide + H2O = L-methionyl-(S)-S-oxide-[protein] + [thioredoxin]-dithiol. The catalysed reaction is [thioredoxin]-disulfide + L-methionine + H2O = L-methionine (S)-S-oxide + [thioredoxin]-dithiol. Has an important function as a repair enzyme for proteins that have been inactivated by oxidation. Catalyzes the reversible oxidation-reduction of methionine sulfoxide in proteins to methionine. The polypeptide is Peptide methionine sulfoxide reductase MsrA (Streptococcus equi subsp. zooepidemicus (strain H70)).